A 299-amino-acid chain; its full sequence is Taste receptor type 2 member 1 (299 aa).

The Extracellular segment spans residues 1 to 9 (MLESHLIIH). A helical transmembrane segment spans residues 10-30 (FLLAVIQFLLGTFTNGIIVVV). The Cytoplasmic segment spans residues 31–55 (NGIDLIKHRKMAPLDLLLSCLAVSR). A helical transmembrane segment spans residues 56-76 (IFLQLFIFYVNVIVIFFIEFI). The Extracellular portion of the chain corresponds to 77 to 81 (MCSEN). Residues 82 to 102 (CAILLFINELELWLATWLGVF) form a helical membrane-spanning segment. Over 103–124 (YCAKVASVPHPLFIWLKMKISK) the chain is Cytoplasmic. Residues 125-145 (LVPWMILGSLLYVSMTCVFHS) form a helical membrane-spanning segment. At 146-178 (KYAGFMVPYFLRNFFSQNATIQKEDTPAIQIFS) the chain is on the extracellular side. The N-linked (GlcNAc...) asparagine glycan is linked to Asn163. Residues 179–199 (FVAEFLVPLLIFLVAVLLLIF) traverse the membrane as a helical segment. The Cytoplasmic portion of the chain corresponds to 200–222 (SLGRHTRQMRNTVAGSRVPGRGA). Residues 223 to 243 (PISALLSILSFVILYFSHCMI) form a helical membrane-spanning segment. Residues 244–257 (KVFLSSLKFHVRSF) are Extracellular-facing. A helical transmembrane segment spans residues 258–278 (ILPFFILVIGIYPSGHSLILI). Residues 279-299 (LGNXKLKQNAKKFLLHSKCCQ) lie on the Cytoplasmic side of the membrane.

The protein belongs to the G-protein coupled receptor T2R family.

Its subcellular location is the membrane. Functionally, receptor that may play a role in the perception of bitterness and is gustducin-linked. May play a role in sensing the chemical composition of the gastrointestinal content. The activity of this receptor may stimulate alpha gustducin, mediate PLC-beta-2 activation and lead to the gating of TRPM5. This is Taste receptor type 2 member 1 (TAS2R1) from Pongo pygmaeus (Bornean orangutan).